Consider the following 103-residue polypeptide: Large ribosomal subunit protein bL21 (103 aa).

Belongs to the bacterial ribosomal protein bL21 family. As to quaternary structure, part of the 50S ribosomal subunit. Contacts protein L20.

Its function is as follows. This protein binds to 23S rRNA in the presence of protein L20. The chain is Large ribosomal subunit protein bL21 from Desulforapulum autotrophicum (strain ATCC 43914 / DSM 3382 / VKM B-1955 / HRM2) (Desulfobacterium autotrophicum).